A 326-amino-acid polypeptide reads, in one-letter code: dTDP-4-dehydro-6-deoxy-D-allose reductase (326 aa).

NAD(+) contacts are provided by residues 15–21 (GALGFIG) and 129–132 (MSSS). Y160 serves as the catalytic Proton donor/acceptor. NAD(+) is bound by residues K164 and 187–190 (PGNV).

It belongs to the NAD(P)-dependent epimerase/dehydratase family.

The catalysed reaction is dTDP-6-deoxy-alpha-D-allose + NAD(+) = dTDP-4-dehydro-6-deoxy-alpha-D-allose + NADH + H(+). The enzyme catalyses dTDP-6-deoxy-alpha-D-allose + NADP(+) = dTDP-4-dehydro-6-deoxy-alpha-D-allose + NADPH + H(+). Catalyzes the stereospecific reduction of the C-4 keto group of dTDP-4-dehydro-6-deoxy-D-allose, leading to dTDP-6-deoxy-D-allose, an intermediate in the biosynthesis of the mycinose moiety of dihydrochalcomycin (GERI-155) antibiotic. Cannot directly reduce dTDP-4-dehydro-6-deoxyglucose, and thus acts after the epimerization step catalyzed by GerF. The sequence is that of dTDP-4-dehydro-6-deoxy-D-allose reductase (gerKI) from Streptomyces sp.